A 127-amino-acid chain; its full sequence is Aspartate 1-decarboxylase (127 aa).

S25 serves as the catalytic Schiff-base intermediate with substrate; via pyruvic acid. Position 25 is a pyruvic acid (Ser) (S25). T57 is a substrate binding site. Residue Y58 is the Proton donor of the active site. 73-75 (GAA) serves as a coordination point for substrate.

This sequence belongs to the PanD family. Heterooctamer of four alpha and four beta subunits. The cofactor is pyruvate. In terms of processing, is synthesized initially as an inactive proenzyme, which is activated by self-cleavage at a specific serine bond to produce a beta-subunit with a hydroxyl group at its C-terminus and an alpha-subunit with a pyruvoyl group at its N-terminus.

The protein resides in the cytoplasm. The enzyme catalyses L-aspartate + H(+) = beta-alanine + CO2. Its pathway is cofactor biosynthesis; (R)-pantothenate biosynthesis; beta-alanine from L-aspartate: step 1/1. Functionally, catalyzes the pyruvoyl-dependent decarboxylation of aspartate to produce beta-alanine. This chain is Aspartate 1-decarboxylase, found in Vesicomyosocius okutanii subsp. Calyptogena okutanii (strain HA).